A 98-amino-acid chain; its full sequence is NADH-ubiquinone oxidoreductase chain 4L (98 aa).

2 consecutive transmembrane segments (helical) span residues 1-21 and 48-68; these read MTLIHFSFCSAFILGLTGLAL and PLHLTIYLSSMMLYIMLPFAA.

This sequence belongs to the complex I subunit 4L family. In terms of assembly, core subunit of respiratory chain NADH dehydrogenase (Complex I) which is composed of 45 different subunits.

Its subcellular location is the mitochondrion inner membrane. It catalyses the reaction a ubiquinone + NADH + 5 H(+)(in) = a ubiquinol + NAD(+) + 4 H(+)(out). Its function is as follows. Core subunit of the mitochondrial membrane respiratory chain NADH dehydrogenase (Complex I) which catalyzes electron transfer from NADH through the respiratory chain, using ubiquinone as an electron acceptor. Part of the enzyme membrane arm which is embedded in the lipid bilayer and involved in proton translocation. The sequence is that of NADH-ubiquinone oxidoreductase chain 4L (mt-nd4l) from Xenopus laevis (African clawed frog).